The following is a 138-amino-acid chain: Putative pre-16S rRNA nuclease (138 aa).

The protein belongs to the YqgF nuclease family.

It localises to the cytoplasm. Functionally, could be a nuclease involved in processing of the 5'-end of pre-16S rRNA. The sequence is that of Putative pre-16S rRNA nuclease from Haemophilus ducreyi (strain 35000HP / ATCC 700724).